The chain runs to 257 residues: Microfibril-associated glycoprotein 4 (257 aa).

A signal peptide spans 1–22; it reads MKALPALPLMLMLLSMPPPCAP. Residues 28 to 30 carry the Cell attachment site motif; that stretch reads RGD. A Fibrinogen C-terminal domain is found at 34–257; sequence KSCLQQPLDC…KRTEMKIRRA (224 aa). Asparagine 89 and asparagine 139 each carry an N-linked (GlcNAc...) asparagine glycan.

Homodimer. Can also form higher oligomers. Interacts with FBN1, FBN2 and LOX. Interacts with COL1A1 in a Ca (2+)-dependent manner. Interacts with ELN in a Ca (2+)-dependent manner; this interaction promotes ELN self-assembly.

It is found in the secreted. The protein resides in the extracellular space. It localises to the extracellular matrix. Could be involved in calcium-dependent cell adhesion or intercellular interactions. May contribute to the elastic fiber assembly and/or maintenance. The chain is Microfibril-associated glycoprotein 4 (Mfap4) from Mus musculus (Mouse).